A 248-amino-acid polypeptide reads, in one-letter code: 3-deoxy-manno-octulosonate cytidylyltransferase (248 aa).

This sequence belongs to the KdsB family.

The protein localises to the cytoplasm. The enzyme catalyses 3-deoxy-alpha-D-manno-oct-2-ulosonate + CTP = CMP-3-deoxy-beta-D-manno-octulosonate + diphosphate. Its pathway is nucleotide-sugar biosynthesis; CMP-3-deoxy-D-manno-octulosonate biosynthesis; CMP-3-deoxy-D-manno-octulosonate from 3-deoxy-D-manno-octulosonate and CTP: step 1/1. The protein operates within bacterial outer membrane biogenesis; lipopolysaccharide biosynthesis. Functionally, activates KDO (a required 8-carbon sugar) for incorporation into bacterial lipopolysaccharide in Gram-negative bacteria. This is 3-deoxy-manno-octulosonate cytidylyltransferase from Photobacterium profundum (strain SS9).